Consider the following 396-residue polypeptide: Phosphoglycerate kinase (396 aa).

Residues 21–23, Arg36, 59–62, Arg118, and Arg151 contribute to the substrate site; these read DFN and HLGR. Residues Lys201, Gly292, Glu323, and 349–352 each bind ATP; that span reads GGDS.

The protein belongs to the phosphoglycerate kinase family. In terms of assembly, monomer.

The protein localises to the cytoplasm. It carries out the reaction (2R)-3-phosphoglycerate + ATP = (2R)-3-phospho-glyceroyl phosphate + ADP. Its pathway is carbohydrate degradation; glycolysis; pyruvate from D-glyceraldehyde 3-phosphate: step 2/5. This chain is Phosphoglycerate kinase, found in Leptospira interrogans serogroup Icterohaemorrhagiae serovar copenhageni (strain Fiocruz L1-130).